Reading from the N-terminus, the 196-residue chain is 3-isopropylmalate dehydratase small subunit (196 aa).

It belongs to the LeuD family. LeuD type 1 subfamily. Heterodimer of LeuC and LeuD.

The enzyme catalyses (2R,3S)-3-isopropylmalate = (2S)-2-isopropylmalate. Its pathway is amino-acid biosynthesis; L-leucine biosynthesis; L-leucine from 3-methyl-2-oxobutanoate: step 2/4. In terms of biological role, catalyzes the isomerization between 2-isopropylmalate and 3-isopropylmalate, via the formation of 2-isopropylmaleate. This is 3-isopropylmalate dehydratase small subunit from Streptococcus gordonii (strain Challis / ATCC 35105 / BCRC 15272 / CH1 / DL1 / V288).